The primary structure comprises 267 residues: Apolipoprotein A-I (267 aa).

The N-terminal stretch at 1–18 (MKAAVLTLAVLFLTGSQA) is a signal peptide. 2 consecutive repeat copies span residues 68-89 (LKLLDNWDSMTSTFSKLREQLG) and 90-111 (PVTQEFWDNLEKETEGLRQEMS). Residues 68–267 (LKLLDNWDSM…EEYTKKLNTQ (200 aa)) are 10 X approximate tandem repeats. Methionine sulfoxide is present on Met-110. One copy of the 3; half-length repeat lies at 112–122 (KDLEEVKAKVQ). 5 tandem repeats follow at residues 123-144 (PYLDDFQKKWQEEMELYRQKVE), 145-166 (PLRAELQEGARQKLHELHEKLS), 167-188 (PLGEEMRDRARAHVDALRTHLA), 189-210 (PYTDELRQRLAARLEALKENGG), and 211-232 (ARLAEYHAKASEHLSTLSEKAK). Met-136 carries the methionine sulfoxide modification. A 9; half-length repeat occupies 233–243 (PALEDLRQGLL). Copy 10 of the repeat occupies 244-267 (PVLESFKVSFLSALEEYTKKLNTQ).

The protein belongs to the apolipoprotein A1/A4/E family. As to quaternary structure, homodimer. Interacts with APOA1BP and CLU. Component of a sperm activating protein complex (SPAP), consisting of APOA1, an immunoglobulin heavy chain, an immunoglobulin light chain and albumin. Interacts with NDRG1. Interacts with SCGB3A2. Interacts with NAXE and YJEFN3. Post-translationally, glycosylated. Palmitoylated. As to expression, major protein of plasma HDL, also found in chylomicrons.

Its subcellular location is the secreted. Functionally, participates in the reverse transport of cholesterol from tissues to the liver for excretion by promoting cholesterol efflux from tissues and by acting as a cofactor for the lecithin cholesterol acyltransferase (LCAT). As part of the SPAP complex, activates spermatozoa motility. In Pongo abelii (Sumatran orangutan), this protein is Apolipoprotein A-I (APOA1).